The following is a 210-amino-acid chain: Putative transmembrane protein DDB_G0267530 (210 aa).

The segment at 1–40 (MGVEDQPQTQPQTQPQQQPQMGYQPQMGYQPQAQMGYQPQ) is disordered. Helical transmembrane passes span 119–139 (VIVFIIGFFFSIVWLGGFFFI) and 148–168 (TFGILSVVFFFLVLVIVVIVV).

Its subcellular location is the membrane. The polypeptide is Putative transmembrane protein DDB_G0267530 (Dictyostelium discoideum (Social amoeba)).